The primary structure comprises 419 residues: CDP-diacylglycerol--serine O-phosphatidyltransferase 3 (419 aa).

The disordered stretch occupies residues 1 to 51 (MPVRRRWYPPSSTAAQPSPDGGDVNTDDADACPSSRQQRPPSLPQHSAPIH). Low complexity predominate over residues 33–47 (PSSRQQRPPSLPQHS). 7 consecutive transmembrane segments (helical) span residues 103–123 (PHTVSVLLAGACLLIWASGVL), 142–162 (WAMIAVFLAYCTLQAPSTILI), 168–188 (VWRLVHGMAVVYLVALTFLLF), 260–280 (LLLWVLSVGFELMELTFRHML), 287–307 (WWDSIILDIMICNWFGIWAGM), 359–379 (FIQVFCLCVGFMTVELNTFFL), and 384–404 (WIPPRNPLVVYRLILWWLIAI).

This sequence belongs to the CDP-alcohol phosphatidyltransferase class-I family.

Its subcellular location is the endoplasmic reticulum membrane. The enzyme catalyses a CDP-1,2-diacyl-sn-glycerol + L-serine = a 1,2-diacyl-sn-glycero-3-phospho-L-serine + CMP + H(+). It functions in the pathway phospholipid metabolism; phosphatidylethanolamine biosynthesis; phosphatidylethanolamine from CDP-diacylglycerol: step 1/2. Functionally, catalyzes a base-exchange reaction in which the polar head group of phosphatidylethanolamine (PE) or phosphatidylcholine (PC) is replaced by L-serine. The sequence is that of CDP-diacylglycerol--serine O-phosphatidyltransferase 3 (PSS3) from Oryza sativa subsp. japonica (Rice).